The chain runs to 229 residues: Cytochrome c oxidase subunit 2 (229 aa).

Topologically, residues 1 to 26 (MSTWANLGLQDSASPLMEQLIFFHDH) are mitochondrial intermembrane. A helical membrane pass occupies residues 27–48 (ALLILVMITVLVGYLMFMLFFN). Residues 49–62 (SYVNRFLLHGQLIE) are Mitochondrial matrix-facing. Residues 63–82 (MIWTILPAIILLFIAMPSLR) form a helical membrane-spanning segment. Over 83–229 (LLYLLDEINE…IKWISNSVNS (147 aa)) the chain is Mitochondrial intermembrane. Residues histidine 161, cysteine 196, glutamate 198, cysteine 200, histidine 204, and methionine 207 each coordinate Cu cation. Glutamate 198 contacts Mg(2+).

The protein belongs to the cytochrome c oxidase subunit 2 family. As to quaternary structure, component of the cytochrome c oxidase (complex IV, CIV), a multisubunit enzyme composed of a catalytic core of 3 subunits and several supernumerary subunits. The complex exists as a monomer or a dimer and forms supercomplexes (SCs) in the inner mitochondrial membrane with ubiquinol-cytochrome c oxidoreductase (cytochrome b-c1 complex, complex III, CIII). Requires Cu cation as cofactor.

Its subcellular location is the mitochondrion inner membrane. It catalyses the reaction 4 Fe(II)-[cytochrome c] + O2 + 8 H(+)(in) = 4 Fe(III)-[cytochrome c] + 2 H2O + 4 H(+)(out). Component of the cytochrome c oxidase, the last enzyme in the mitochondrial electron transport chain which drives oxidative phosphorylation. The respiratory chain contains 3 multisubunit complexes succinate dehydrogenase (complex II, CII), ubiquinol-cytochrome c oxidoreductase (cytochrome b-c1 complex, complex III, CIII) and cytochrome c oxidase (complex IV, CIV), that cooperate to transfer electrons derived from NADH and succinate to molecular oxygen, creating an electrochemical gradient over the inner membrane that drives transmembrane transport and the ATP synthase. Cytochrome c oxidase is the component of the respiratory chain that catalyzes the reduction of oxygen to water. Electrons originating from reduced cytochrome c in the intermembrane space (IMS) are transferred via the dinuclear copper A center (CU(A)) of subunit 2 and heme A of subunit 1 to the active site in subunit 1, a binuclear center (BNC) formed by heme A3 and copper B (CU(B)). The BNC reduces molecular oxygen to 2 water molecules using 4 electrons from cytochrome c in the IMS and 4 protons from the mitochondrial matrix. In Drosophila narragansett (Fruit fly), this protein is Cytochrome c oxidase subunit 2 (mt:CoII).